Consider the following 319-residue polypeptide: N-acetyl-D-glucosamine kinase (319 aa).

T14 is an ATP binding site. Substrate-binding residues include N37 and D113. T135 is a binding site for ATP. Substrate-binding positions include 153–155 and D160; that span reads GWG. Residue A220 coordinates ATP.

The protein belongs to the eukaryotic-type N-acetylglucosamine kinase family. Homodimer.

The enzyme catalyses N-acetyl-D-glucosamine + ATP = N-acetyl-D-glucosamine 6-phosphate + ADP + H(+). Its function is as follows. Converts N-acetylglucosamine (GlcNAc), a major component of complex carbohydrates, into GlcNAc 6-phosphate. Also has ManNAc kinase activity. This chain is N-acetyl-D-glucosamine kinase (nagk), found in Dictyostelium discoideum (Social amoeba).